Consider the following 166-residue polypeptide: NAD(P)H-quinone oxidoreductase subunit I, chloroplastic (166 aa).

4Fe-4S ferredoxin-type domains lie at 55–84 (GRIHFEFDKCIACEVCVRVCPIDLPVVDWK) and 95–124 (LNYSIDFGICIFCGNCVEYCPTNCLSMTEE). Cys64, Cys67, Cys70, Cys74, Cys104, Cys107, Cys110, and Cys114 together coordinate [4Fe-4S] cluster.

The protein belongs to the complex I 23 kDa subunit family. As to quaternary structure, NDH is composed of at least 16 different subunits, 5 of which are encoded in the nucleus. [4Fe-4S] cluster is required as a cofactor.

The protein localises to the plastid. Its subcellular location is the chloroplast thylakoid membrane. The enzyme catalyses a plastoquinone + NADH + (n+1) H(+)(in) = a plastoquinol + NAD(+) + n H(+)(out). The catalysed reaction is a plastoquinone + NADPH + (n+1) H(+)(in) = a plastoquinol + NADP(+) + n H(+)(out). NDH shuttles electrons from NAD(P)H:plastoquinone, via FMN and iron-sulfur (Fe-S) centers, to quinones in the photosynthetic chain and possibly in a chloroplast respiratory chain. The immediate electron acceptor for the enzyme in this species is believed to be plastoquinone. Couples the redox reaction to proton translocation, and thus conserves the redox energy in a proton gradient. This is NAD(P)H-quinone oxidoreductase subunit I, chloroplastic from Marshallia caespitosa (Barbara's buttons).